Consider the following 1752-residue polypeptide: Chitin synthase E (1752 aa).

1-8 is an ATP binding site; sequence GESGSGKT. The tract at residues 492–520 is disordered; it reads SSKPLRMPSMARRKTSPSSRLAFDAGDAD. Residues 558–582 form an actin-binding region; that stretch reads LDIVNKCLSSTNLNPYFIFCLKPND. A run of 2 helical transmembrane segments spans residues 789–809 and 828–848; these read WIAL…KLFG and LIIW…PGLV. Residues 852–940 enclose the Cytochrome b5 heme-binding domain; the sequence is QHVYSAAELS…LLDYRPTNIS (89 aa). Residues N938 and N963 are each glycosylated (N-linked (GlcNAc...) asparagine). The chain crosses the membrane as a helical span at residues 1099–1119; the sequence is FILAISVLICSIIVFKFLAAL. N-linked (GlcNAc...) asparagine glycosylation is found at N1322, N1356, and N1462. Helical transmembrane passes span 1494-1514, 1520-1540, and 1547-1567; these read LSTV…YWLV, IPYT…LIFI, and MVGW…PCPS. N-linked (GlcNAc...) asparagine glycosylation occurs at N1685. In terms of domain architecture, DEK-C spans 1689–1744; it reads LPSDDAILAEIREILRTADLMSVTKKSIKLELERAFGVNLDLKRPYINSGKGYTFP.

The protein in the N-terminal section; belongs to the TRAFAC class myosin-kinesin ATPase superfamily. Myosin family. In the C-terminal section; belongs to the chitin synthase family. Class V subfamily.

It is found in the cell membrane. It localises to the cell septum. The protein resides in the cell tip. It carries out the reaction [(1-&gt;4)-N-acetyl-beta-D-glucosaminyl](n) + UDP-N-acetyl-alpha-D-glucosamine = [(1-&gt;4)-N-acetyl-beta-D-glucosaminyl](n+1) + UDP + H(+). In terms of biological role, polymerizes chitin, a structural polymer of the cell wall and septum, by transferring the sugar moiety of UDP-GlcNAc to the non-reducing end of the growing chitin polymer. Important for hyphal growth and conidiophore development but not pathogenicity. The protein is Chitin synthase E of Aspergillus fumigatus (Neosartorya fumigata).